Reading from the N-terminus, the 495-residue chain is Acetyl-coenzyme A carboxylase carboxyl transferase subunit beta, chloroplastic (495 aa).

Residues 187–208 (ESRNSSENEGSSRRTRTKGSDL) form a disordered region. The CoA carboxyltransferase N-terminal domain maps to 226 to 495 (LWVQCENCYG…PLNQKSSKIK (270 aa)). Positions 230, 233, 249, and 252 each coordinate Zn(2+). The C4-type zinc finger occupies 230–252 (CENCYGLNYKKFLKSKMNICEQC).

The protein belongs to the AccD/PCCB family. In terms of assembly, acetyl-CoA carboxylase is a heterohexamer composed of biotin carboxyl carrier protein, biotin carboxylase and 2 subunits each of ACCase subunit alpha and ACCase plastid-coded subunit beta (accD). The cofactor is Zn(2+). In terms of tissue distribution, RNA expressed in leaf, root and stem; the least expression occurs in stems.

It is found in the plastid. The protein resides in the chloroplast stroma. It catalyses the reaction N(6)-carboxybiotinyl-L-lysyl-[protein] + acetyl-CoA = N(6)-biotinyl-L-lysyl-[protein] + malonyl-CoA. It participates in lipid metabolism; malonyl-CoA biosynthesis; malonyl-CoA from acetyl-CoA: step 1/1. Functionally, component of the acetyl coenzyme A carboxylase (ACC) complex. Biotin carboxylase (BC) catalyzes the carboxylation of biotin on its carrier protein (BCCP) and then the CO(2) group is transferred by the transcarboxylase to acetyl-CoA to form malonyl-CoA. This Nicotiana tabacum (Common tobacco) protein is Acetyl-coenzyme A carboxylase carboxyl transferase subunit beta, chloroplastic.